A 210-amino-acid chain; its full sequence is Orotate phosphoribosyltransferase (210 aa).

5-phospho-alpha-D-ribose 1-diphosphate-binding positions include Arg-96, Lys-100, His-102, and 122 to 130 (EDLISTGGS). Ser-126 is a binding site for orotate.

Belongs to the purine/pyrimidine phosphoribosyltransferase family. PyrE subfamily. Homodimer. Requires Mg(2+) as cofactor.

It catalyses the reaction orotidine 5'-phosphate + diphosphate = orotate + 5-phospho-alpha-D-ribose 1-diphosphate. The protein operates within pyrimidine metabolism; UMP biosynthesis via de novo pathway; UMP from orotate: step 1/2. In terms of biological role, catalyzes the transfer of a ribosyl phosphate group from 5-phosphoribose 1-diphosphate to orotate, leading to the formation of orotidine monophosphate (OMP). The polypeptide is Orotate phosphoribosyltransferase (pyrE) (Streptococcus pneumoniae serotype 19F (strain G54)).